Consider the following 494-residue polypeptide: Alpha-amylase-related protein (494 aa).

The signal sequence occupies residues methionine 1–alanine 20. The residue at position 21 (glutamine 21) is a Pyrrolidone carboxylic acid. An intrachain disulfide couples cysteine 48 to cysteine 104. Asparagine 118, glutamine 169, and aspartate 178 together coordinate Ca(2+). A disulfide bridge links cysteine 157 with cysteine 171. Chloride is bound at residue arginine 206. Residue aspartate 208 is the Nucleophile of the active site. Position 212 (histidine 212) interacts with Ca(2+). The Proton donor role is filled by glutamate 245. 2 residues coordinate chloride: asparagine 308 and arginine 343. 3 disulfides stabilise this stretch: cysteine 376-cysteine 382, cysteine 418-cysteine 441, and cysteine 448-cysteine 460.

This sequence belongs to the glycosyl hydrolase 13 family. In terms of assembly, monomer. The cofactor is Ca(2+). It depends on chloride as a cofactor.

The protein resides in the secreted. The enzyme catalyses Endohydrolysis of (1-&gt;4)-alpha-D-glucosidic linkages in polysaccharides containing three or more (1-&gt;4)-alpha-linked D-glucose units.. In Drosophila serrata (Fruit fly), this protein is Alpha-amylase-related protein (Amyrel).